A 371-amino-acid polypeptide reads, in one-letter code: Homoserine O-acetyltransferase (371 aa).

The region spanning 44–350 (NAILVEHAWT…SYGHDAFLLE (307 aa)) is the AB hydrolase-1 domain. The active-site Nucleophile is serine 150. Substrate is bound at residue arginine 217. Catalysis depends on residues aspartate 311 and histidine 344. Aspartate 345 is a binding site for substrate.

The protein belongs to the AB hydrolase superfamily. MetX family. In terms of assembly, homodimer.

Its subcellular location is the cytoplasm. The catalysed reaction is L-homoserine + acetyl-CoA = O-acetyl-L-homoserine + CoA. It participates in amino-acid biosynthesis; L-methionine biosynthesis via de novo pathway; O-acetyl-L-homoserine from L-homoserine: step 1/1. Its function is as follows. Transfers an acetyl group from acetyl-CoA to L-homoserine, forming acetyl-L-homoserine. The sequence is that of Homoserine O-acetyltransferase from Pelobacter propionicus (strain DSM 2379 / NBRC 103807 / OttBd1).